A 266-amino-acid chain; its full sequence is 5'-nucleotidase SurE (266 aa).

4 residues coordinate a divalent metal cation: Asp8, Asp9, Ser40, and Asn98.

The protein belongs to the SurE nucleotidase family. It depends on a divalent metal cation as a cofactor.

The protein localises to the cytoplasm. The enzyme catalyses a ribonucleoside 5'-phosphate + H2O = a ribonucleoside + phosphate. Functionally, nucleotidase that shows phosphatase activity on nucleoside 5'-monophosphates. The chain is 5'-nucleotidase SurE from Parasynechococcus marenigrum (strain WH8102).